We begin with the raw amino-acid sequence, 657 residues long: Probable serine/threonine-protein kinase CA_C1728 (657 aa).

Positions 10–274 constitute a Protein kinase domain; that stretch reads YKIEEEIGVG…ELSNVKNNYV (265 aa). ATP contacts are provided by residues 16 to 24 and lysine 39; that span reads IGVGGTAVV. Aspartate 143 functions as the Proton acceptor in the catalytic mechanism. The interval 286–334 is disordered; sequence PAQIQNESNPNNKLDNDDTYYNGEPYNKEQPQEEPQEENEEPKNKIKGN. Over residues 288-298 the composition is skewed to polar residues; the sequence is QIQNESNPNNK. 3 PASTA domains span residues 375–441, 443–509, and 512–577; these read SVSK…DISS, DTDQ…VISR, and EVKK…VIGR. The segment at 581–657 is disordered; sequence TAVQPPNNNN…TNTPNGTGQK (77 aa). Low complexity-rich tracts occupy residues 584–600, 613–637, and 645–657; these read QPPN…QNQN, PTGG…PAGG, and GNVT…TGQK.

This sequence belongs to the protein kinase superfamily. Ser/Thr protein kinase family.

The catalysed reaction is L-seryl-[protein] + ATP = O-phospho-L-seryl-[protein] + ADP + H(+). The enzyme catalyses L-threonyl-[protein] + ATP = O-phospho-L-threonyl-[protein] + ADP + H(+). This Clostridium acetobutylicum (strain ATCC 824 / DSM 792 / JCM 1419 / IAM 19013 / LMG 5710 / NBRC 13948 / NRRL B-527 / VKM B-1787 / 2291 / W) protein is Probable serine/threonine-protein kinase CA_C1728.